Here is a 375-residue protein sequence, read N- to C-terminus: Esterase AN6793 (375 aa).

The interval 138 to 158 (RHPQPGLDPGHGHRHKRMPPL) is disordered.

It belongs to the sidJ hydrolase family. As to quaternary structure, homodimer.

The protein operates within secondary metabolite biosynthesis. Esterase; part of a cluster that mediates the biosynthesis of a yet undetermined secondary metabolite. With the HR-PKS AN6791, produces a pathway intermediate compound with molecular weight 258. The protein is Esterase AN6793 of Emericella nidulans (strain FGSC A4 / ATCC 38163 / CBS 112.46 / NRRL 194 / M139) (Aspergillus nidulans).